Consider the following 310-residue polypeptide: Alpha/beta hydrolase domain-containing protein 17A (310 aa).

Active-site charge relay system residues include Ser190, Asp255, and His284. Phosphoserine is present on Ser307.

Belongs to the AB hydrolase superfamily. ABHD17 family. In terms of processing, palmitoylated on cysteine residues located in a cysteine cluster at the N-terminus which promotes membrane localization. Palmitoylation is required for post-synaptic localization and for depalmitoylating activity towards DLG4/PSD95.

It is found in the cell membrane. Its subcellular location is the endosome membrane. The protein localises to the cell projection. The protein resides in the dendritic spine. It localises to the postsynaptic density membrane. It catalyses the reaction S-hexadecanoyl-L-cysteinyl-[protein] + H2O = L-cysteinyl-[protein] + hexadecanoate + H(+). Inhibited by palmostatin-B. Functionally, hydrolyzes fatty acids from S-acylated cysteine residues in proteins. Has depalmitoylating activity towards NRAS. Has depalmitoylating activity towards DLG4/PSD95. May have depalmitoylating activity towards MAP6. The polypeptide is Alpha/beta hydrolase domain-containing protein 17A (Homo sapiens (Human)).